We begin with the raw amino-acid sequence, 613 residues long: Laccase 1 (613 aa).

The first 20 residues, 1–20 (MSRFARLLLIVALFFTGAWA), serve as a signal peptide directing secretion. Plastocyanin-like domains are found at residues 29–142 (ITWK…IRPK) and 171–359 (YLVV…MRIP). A glycan (N-linked (GlcNAc...) asparagine) is linked at asparagine 74. Positions 78, 80, 122, and 124 each coordinate Cu cation. N-linked (GlcNAc...) asparagine glycans are attached at residues asparagine 256, asparagine 279, asparagine 444, asparagine 468, and asparagine 484. The region spanning 468-598 (NATRDTENDG…GGMGIAILDG (131 aa)) is the Plastocyanin-like 3 domain. Residues histidine 506, histidine 509, and histidine 511 each coordinate Cu cation. N-linked (GlcNAc...) asparagine glycosylation is present at asparagine 526. Cu cation is bound by residues histidine 580, cysteine 581, histidine 582, and histidine 586.

Belongs to the multicopper oxidase family. It depends on Cu cation as a cofactor.

The protein resides in the cell surface. The protein operates within pigment biosynthesis. Functionally, laccase; part of the Pks1 gene cluster that mediates the biosynthesis of an anthraquinone derivative pigment that contributes to conidial pigmentation that provides protection from UV radiation, heat and cold stress. The polyketide synthase Pks1 produces 1-acetyl-2,4,6,8-tetrahydroxy-9,10-anthraquinone though condensation of acetyl-CoA with malonyl-CoA. The dehydratase EthD and the laccase Mlac1 further convert the anthraquinone derivative into the final conidial pigment. In Metarhizium guizhouense (strain ARSEF 977), this protein is Laccase 1.